The primary structure comprises 705 residues: Putative membrane protein SCO0839 (705 aa).

Helical transmembrane passes span 16–36 (WLVP…LGPY), 177–197 (GIDG…LLLV), 202–222 (LLPL…CAIV), 237–257 (VQGI…LLLT), 281–301 (SWGA…ALLL), 316–336 (IGIV…LVLL), 373–393 (IWAL…TLSS), 529–549 (LIVP…LRSL), 554–574 (LLVA…ALVF), 587–607 (VPLY…IFLM), 627–647 (LTAT…TFAA), and 648–668 (LGVI…FGVL).

It belongs to the resistance-nodulation-cell division (RND) (TC 2.A.6) family. MmpL subfamily.

Its subcellular location is the cell membrane. This is Putative membrane protein SCO0839 from Streptomyces coelicolor (strain ATCC BAA-471 / A3(2) / M145).